Consider the following 537-residue polypeptide: CTP synthase (537 aa).

Residues Met1 to Leu268 are amidoligase domain. Ser14 provides a ligand contact to CTP. Ser14 contributes to the UTP binding site. Ser15 to Ile20 serves as a coordination point for ATP. Residue Tyr55 participates in L-glutamine binding. Asp72 contributes to the ATP binding site. The Mg(2+) site is built by Asp72 and Glu142. CTP is bound by residues Asp149–Glu151, Lys189–Gln194, and Lys225. Residues Lys189–Gln194 and Lys225 contribute to the UTP site. The Glutamine amidotransferase type-1 domain maps to Arg293–Asp536. Gly355 contributes to the L-glutamine binding site. The Nucleophile; for glutamine hydrolysis role is filled by Cys382. Residues Leu383–Gln386, Glu406, and Arg464 each bind L-glutamine. Catalysis depends on residues His509 and Glu511.

Belongs to the CTP synthase family. In terms of assembly, homotetramer.

It carries out the reaction UTP + L-glutamine + ATP + H2O = CTP + L-glutamate + ADP + phosphate + 2 H(+). It catalyses the reaction L-glutamine + H2O = L-glutamate + NH4(+). The enzyme catalyses UTP + NH4(+) + ATP = CTP + ADP + phosphate + 2 H(+). Its pathway is pyrimidine metabolism; CTP biosynthesis via de novo pathway; CTP from UDP: step 2/2. Its activity is regulated as follows. Allosterically activated by GTP, when glutamine is the substrate; GTP has no effect on the reaction when ammonia is the substrate. The allosteric effector GTP functions by stabilizing the protein conformation that binds the tetrahedral intermediate(s) formed during glutamine hydrolysis. Inhibited by the product CTP, via allosteric rather than competitive inhibition. Functionally, catalyzes the ATP-dependent amination of UTP to CTP with either L-glutamine or ammonia as the source of nitrogen. Regulates intracellular CTP levels through interactions with the four ribonucleotide triphosphates. This is CTP synthase from Streptococcus sanguinis (strain SK36).